Consider the following 460-residue polypeptide: tRNA-splicing endonuclease subunit Sen2 (460 aa).

The disordered stretch occupies residues 143 to 215 (EKEETPQHEP…SPSSHNGHVA (73 aa)). A compositionally biased stretch (basic and acidic residues) spans 159–170 (SSLEGRVEKDEL). Catalysis depends on residues Tyr-364 and His-372. Phosphoserine occurs at positions 403, 406, and 410. The active site involves Lys-411.

It belongs to the tRNA-intron endonuclease family. In terms of assembly, tRNA splicing endonuclease is a heterotetramer composed of TSEN2, TSEN15, TSEN34/LENG5 and TSEN54. tRNA splicing endonuclease complex also contains proteins of the pre-mRNA 3'-end processing machinery such as CLP1, CPSF1, CPSF4 and CSTF2.

The protein resides in the nucleus. It is found in the nucleolus. It catalyses the reaction pretRNA = a 3'-half-tRNA molecule with a 5'-OH end + a 5'-half-tRNA molecule with a 2',3'-cyclic phosphate end + an intron with a 2',3'-cyclic phosphate and a 5'-hydroxyl terminus.. Its function is as follows. Constitutes one of the two catalytic subunit of the tRNA-splicing endonuclease complex, a complex responsible for identification and cleavage of the splice sites in pre-tRNA. It cleaves pre-tRNA at the 5'- and 3'-splice sites to release the intron. The products are an intron and two tRNA half-molecules bearing 2',3'-cyclic phosphate and 5'-OH termini. There are no conserved sequences at the splice sites, but the intron is invariably located at the same site in the gene, placing the splice sites an invariant distance from the constant structural features of the tRNA body. Probably carries the active site for 5'-splice site cleavage. The tRNA splicing endonuclease is also involved in mRNA processing via its association with pre-mRNA 3'-end processing factors, establishing a link between pre-tRNA splicing and pre-mRNA 3'-end formation, suggesting that the endonuclease subunits function in multiple RNA-processing events. The protein is tRNA-splicing endonuclease subunit Sen2 (Tsen2) of Mus musculus (Mouse).